Here is a 205-residue protein sequence, read N- to C-terminus: Ribonuclease HII (205 aa).

An RNase H type-2 domain is found at Thr-13 to Cys-205. Asp-19, Glu-20, and Asp-114 together coordinate a divalent metal cation.

It belongs to the RNase HII family. Requires Mn(2+) as cofactor. The cofactor is Mg(2+).

It is found in the cytoplasm. It catalyses the reaction Endonucleolytic cleavage to 5'-phosphomonoester.. Functionally, endonuclease that specifically degrades the RNA of RNA-DNA hybrids. The protein is Ribonuclease HII of Blochmanniella floridana.